The primary structure comprises 1142 residues: Probable serine/threonine-protein kinase fhkB (1142 aa).

Residues 1-16 show a composition bias toward polar residues; that stretch reads MSQDIQTQNSYSDELY. Disordered regions lie at residues 1 to 359, 374 to 404, and 432 to 451; these read MSQD…RLSQ, NTHT…KKQQ, and QIIG…QPPV. 2 stretches are compositionally biased toward low complexity: residues 17–72 and 83–157; these read SSQI…FSQN and QNSY…PSSQ. Residues 158 to 178 are compositionally biased toward polar residues; it reads KRFFQSQNDDFVPSSQVTSLQ. Positions 186 to 302 form a coiled coil; the sequence is IQQQQQQQQQ…DYEQENDDDD (117 aa). Low complexity predominate over residues 187–260; sequence QQQQQQQQQQ…QQTQQQQQQP (74 aa). 2 stretches are compositionally biased toward acidic residues: residues 261 to 277 and 283 to 325; these read QEDD…DNYE and EGEE…EEES. Low complexity predominate over residues 333 to 348; it reads RALQSRSSQSRPLLRS. The segment covering 374-397 has biased composition (polar residues); that stretch reads NTHTNQLGQSSQQTNSPNVHFNSL. Residues 393 to 434 are a coiled coil; that stretch reads HFNSLQQKKKQQQQQQQQQQQQQQQQQQQQQQQQQQQSQQII. A compositionally biased stretch (low complexity) spans 432–443; sequence QIIGSQSSQSSQ. Residues 480-551 form the FHA domain; that stretch reads IVVGRSSSCD…NGSYINGELI (72 aa). Positions 625-885 constitute a Protein kinase domain; the sequence is YYFVKEIGSG…IKEALNHPWF (261 aa). ATP contacts are provided by residues 631–639 and Lys-654; that span reads IGSGGYGIV. Asp-747 functions as the Proton acceptor in the catalytic mechanism. Residues 947-1142 are disordered; the sequence is FDNNNNNNNN…HQQYTQHTTM (196 aa). Over residues 949–1034 the composition is skewed to low complexity; it reads NNNNNNNNNN…HNHNLNNHNH (86 aa). A compositionally biased stretch (basic residues) spans 1035-1067; it reads NNNHHHNHNHNHNHNHNHNHNHNHNHNHNHNHN. The span at 1068 to 1133 shows a compositional bias: low complexity; sequence NHNNNNNNNN…NNINNNNNYH (66 aa). Residues 1090–1132 are a coiled coil; sequence NNNNNNNNNNNNNNNNNNNNYYNNNINNINNNINNNINNNNNY.

The protein belongs to the protein kinase superfamily. CAMK Ser/Thr protein kinase family. CHK2 subfamily.

The catalysed reaction is L-seryl-[protein] + ATP = O-phospho-L-seryl-[protein] + ADP + H(+). It carries out the reaction L-threonyl-[protein] + ATP = O-phospho-L-threonyl-[protein] + ADP + H(+). This chain is Probable serine/threonine-protein kinase fhkB (fhkB), found in Dictyostelium discoideum (Social amoeba).